We begin with the raw amino-acid sequence, 256 residues long: Transcription factor BHLH094 (256 aa).

Residues 1–125 (MDPAPSLAAE…TPPEPPKQDY (125 aa)) are disordered. A compositionally biased stretch (basic and acidic residues) spans 79-97 (PEAKRLKPMKSSDKNDSLR). The basic motif; degenerate stretch occupies residues 134-147 (QATDSHSLAERARR). In terms of domain architecture, bHLH spans 134-184 (QATDSHSLAERARREKISERMKILQDLVPGCNKVIGKASVLDEIINYIQSL). A helix-loop-helix motif region spans residues 148–184 (EKISERMKILQDLVPGCNKVIGKASVLDEIINYIQSL).

It belongs to the bHLH protein family. In terms of assembly, interacts with RSS3. Forms a ternary complex with RSS3 and TIFY11A/JAZ9 in the nucleus.

The protein resides in the nucleus. In terms of biological role, transcription factor that forms a ternary complex with RSS3 and TIFY11A/JAZ9 to negatively regulate jasmonate-responsive genes. The sequence is that of Transcription factor BHLH094 from Oryza sativa subsp. japonica (Rice).